A 431-amino-acid chain; its full sequence is Serine hydroxymethyltransferase (431 aa).

Residues leucine 128 and 132–134 (GHL) contribute to the (6S)-5,6,7,8-tetrahydrofolate site. N6-(pyridoxal phosphate)lysine is present on lysine 237.

This sequence belongs to the SHMT family. Homodimer. Pyridoxal 5'-phosphate is required as a cofactor.

The protein localises to the cytoplasm. The enzyme catalyses (6R)-5,10-methylene-5,6,7,8-tetrahydrofolate + glycine + H2O = (6S)-5,6,7,8-tetrahydrofolate + L-serine. It functions in the pathway one-carbon metabolism; tetrahydrofolate interconversion. The protein operates within amino-acid biosynthesis; glycine biosynthesis; glycine from L-serine: step 1/1. Catalyzes the reversible interconversion of serine and glycine with tetrahydrofolate (THF) serving as the one-carbon carrier. This reaction serves as the major source of one-carbon groups required for the biosynthesis of purines, thymidylate, methionine, and other important biomolecules. Also exhibits THF-independent aldolase activity toward beta-hydroxyamino acids, producing glycine and aldehydes, via a retro-aldol mechanism. The sequence is that of Serine hydroxymethyltransferase from Ruegeria pomeroyi (strain ATCC 700808 / DSM 15171 / DSS-3) (Silicibacter pomeroyi).